A 743-amino-acid polypeptide reads, in one-letter code: MTISNTRPITPDLIASHGLKPDEYERILNLIGREPTFTELGIFSAMWNEHCSYKSSKKWLRTLPTKGPRVIQGPGENAGVVDIDDGDCVVFKMESHNHPSYIEPYQGAATGVGGILRDVFTMGARPVAAMNALRFGSPDHPKTRHLVSGVVAGVGGYGNSFGVPTVGGEVEFDARYNGNILVNAFAAGLAKTDAIFYSKAEGVGLPVVYLGAKTGRDGVGGATMASAEFDESIEEKRPTVQVGDPFTEKCLLEACLELMQTGAVIAIQDMGAAGLTCSAVEMGAKGDLGIELDLDKVPVREERMTAYEMMLSESQERMLMVLRPEKEEEAKAIFVKWGLDFAIVGKTTDDLRFRILHQGEEVANLPIKELGDEAPEYDRPWTPARAPSPLATNDVPQADVSDALLKLVGSANNSSRRWVYEQYDTLIQGNSLQLPGGDAGVIRVEGHETKALAFSSDVTPRYVEADPFEGGKQAVAECWRNLTATGALPLAATDNLNFGNPERPEIMSQLVHAIKGIGEACQALDFPIVSGNVSLYNETNGQAILPTPTIGGVGLVRDWSKMARIRFAAANETILLAGAPESWGTHIGQSVYMRDIHGRTDGPAPHVDLGHERKVGDFVRGLIEDGLVTAVHDCSSGGLALAVAEMAIASGIGATIDAPAEHDPIPVFYGEDQGRYVVTVAEGSAETVAARAKAAGVALPVIGRTGGNAVQLGDARPVSVDELRSAHEAWFPNYMGGDLAPDN.

His-50 is an active-site residue. 2 residues coordinate ATP: Tyr-53 and Lys-92. Residue Glu-94 coordinates Mg(2+). Residues 95-98 (SHNH) and Arg-117 contribute to the substrate site. His-96 (proton acceptor) is an active-site residue. Residue Asp-118 coordinates Mg(2+). Gln-241 lines the substrate pocket. Asp-269 provides a ligand contact to Mg(2+). 313-315 (ESQ) is a substrate binding site. ATP-binding residues include Asp-494 and Gly-531. Asn-532 is a binding site for Mg(2+). A substrate-binding site is contributed by Ser-534.

This sequence belongs to the FGAMS family. Monomer. Part of the FGAM synthase complex composed of 1 PurL, 1 PurQ and 2 PurS subunits.

The protein localises to the cytoplasm. The catalysed reaction is N(2)-formyl-N(1)-(5-phospho-beta-D-ribosyl)glycinamide + L-glutamine + ATP + H2O = 2-formamido-N(1)-(5-O-phospho-beta-D-ribosyl)acetamidine + L-glutamate + ADP + phosphate + H(+). It functions in the pathway purine metabolism; IMP biosynthesis via de novo pathway; 5-amino-1-(5-phospho-D-ribosyl)imidazole from N(2)-formyl-N(1)-(5-phospho-D-ribosyl)glycinamide: step 1/2. In terms of biological role, part of the phosphoribosylformylglycinamidine synthase complex involved in the purines biosynthetic pathway. Catalyzes the ATP-dependent conversion of formylglycinamide ribonucleotide (FGAR) and glutamine to yield formylglycinamidine ribonucleotide (FGAM) and glutamate. The FGAM synthase complex is composed of three subunits. PurQ produces an ammonia molecule by converting glutamine to glutamate. PurL transfers the ammonia molecule to FGAR to form FGAM in an ATP-dependent manner. PurS interacts with PurQ and PurL and is thought to assist in the transfer of the ammonia molecule from PurQ to PurL. This chain is Phosphoribosylformylglycinamidine synthase subunit PurL, found in Rhizobium meliloti (strain 1021) (Ensifer meliloti).